The sequence spans 289 residues: ATP synthase gamma chain (289 aa).

It belongs to the ATPase gamma chain family. F-type ATPases have 2 components, CF(1) - the catalytic core - and CF(0) - the membrane proton channel. CF(1) has five subunits: alpha(3), beta(3), gamma(1), delta(1), epsilon(1). CF(0) has three main subunits: a, b and c.

Its subcellular location is the cell inner membrane. In terms of biological role, produces ATP from ADP in the presence of a proton gradient across the membrane. The gamma chain is believed to be important in regulating ATPase activity and the flow of protons through the CF(0) complex. This is ATP synthase gamma chain from Aromatoleum aromaticum (strain DSM 19018 / LMG 30748 / EbN1) (Azoarcus sp. (strain EbN1)).